The chain runs to 1385 residues: DNA-directed RNA polymerase subunit beta' (1385 aa).

Zn(2+)-binding residues include Cys-72, Cys-74, Cys-87, and Cys-90. Asp-467, Asp-469, and Asp-471 together coordinate Mg(2+). The Zn(2+) site is built by Cys-829, Cys-910, Cys-917, and Cys-920.

Belongs to the RNA polymerase beta' chain family. As to quaternary structure, the RNAP catalytic core consists of 2 alpha, 1 beta, 1 beta' and 1 omega subunit. When a sigma factor is associated with the core the holoenzyme is formed, which can initiate transcription. The cofactor is Mg(2+). Requires Zn(2+) as cofactor.

The catalysed reaction is RNA(n) + a ribonucleoside 5'-triphosphate = RNA(n+1) + diphosphate. In terms of biological role, DNA-dependent RNA polymerase catalyzes the transcription of DNA into RNA using the four ribonucleoside triphosphates as substrates. The chain is DNA-directed RNA polymerase subunit beta' from Elusimicrobium minutum (strain Pei191).